The primary structure comprises 393 residues: Na(+)/H(+) antiporter NhaA 2 (393 aa).

Helical transmembrane passes span 18–38 (SGGL…NSQL), 53–73 (LSVQ…MVGL), 91–111 (ILPG…YLAF), 120–140 (GWAI…SLLG), 149–169 (VFLA…IGLF), 172–192 (TGVS…LVAL), 208–228 (LVLW…GVLL), 263–283 (FIIV…GLGM), 294–314 (VAAG…LLLV), 332–352 (GTTL…LLAF), and 363–383 (IGIL…LRFS).

The protein belongs to the NhaA Na(+)/H(+) (TC 2.A.33) antiporter family.

It is found in the cell inner membrane. It carries out the reaction Na(+)(in) + 2 H(+)(out) = Na(+)(out) + 2 H(+)(in). Functionally, na(+)/H(+) antiporter that extrudes sodium in exchange for external protons. In Brucella anthropi (strain ATCC 49188 / DSM 6882 / CCUG 24695 / JCM 21032 / LMG 3331 / NBRC 15819 / NCTC 12168 / Alc 37) (Ochrobactrum anthropi), this protein is Na(+)/H(+) antiporter NhaA 2.